Reading from the N-terminus, the 38-residue chain is Bacteriocin BAC79 (38 aa).

With respect to regulation, the antimicrobial activity of BAC79 was completely lost after treatment with enzymes trypsin, pepsin, proteinase-K, and carboxypeptidase, while there was no loss of activity with either amylase or lipase. Its function is as follows. Has antibacterial activity against a wide spectrum of Gram-positive and Gram-negative bacteria, including L.monocytogenes which is inhibited through disruption of the cell membrane. This Weissella confusa (Lactobacillus confusus) protein is Bacteriocin BAC79.